The sequence spans 738 residues: Cleavage and polyadenylation specificity factor subunit 2 (738 aa).

It belongs to the metallo-beta-lactamase superfamily. RNA-metabolizing metallo-beta-lactamase-like family. CPSF2/YSH1 subfamily. As to quaternary structure, CPSF is a heterotetramer composed of four distinct subunits 160, 100, 70 and 30 kDa.

It is found in the nucleus. In terms of biological role, CPSF plays a key role in pre-mRNA 3'-end formation, recognizing the AAUAAA signal sequence and interacting with poly(A)polymerase and other factors to bring about cleavage and poly(A) addition. This chain is Cleavage and polyadenylation specificity factor subunit 2, found in Oryza sativa subsp. japonica (Rice).